Consider the following 274-residue polypeptide: Cytochrome b-c1 complex subunit Rieske, mitochondrial (274 aa).

The Mitochondrial matrix segment spans residues 79 to 103; it reads SHTDVKVPDFYDYRRLEVLDSTKSS. Residues 104–140 form a helical membrane-spanning segment; sequence RESSEARKGFSYLVTAVTTVGVAYAAKNAVTQFISSM. Residues 141–274 are Mitochondrial intermembrane-facing; it reads SASADVLAMA…FTSDDMVVVG (134 aa). Residues 187-272 enclose the Rieske domain; it reads EAAVELSQLR…YEFTSDDMVV (86 aa). 5 residues coordinate [2Fe-2S] cluster: Cys-217, His-219, Cys-236, His-239, and Ser-241. Cys-222 and Cys-238 are oxidised to a cystine.

The protein belongs to the Rieske iron-sulfur protein family. As to quaternary structure, component of the ubiquinol-cytochrome c oxidoreductase (cytochrome b-c1 complex, complex III, CIII), a multisubunit enzyme composed of 11 subunits. The complex is composed of 3 respiratory subunits cytochrome b, cytochrome c1 and Rieske protein UQCRFS1, 2 core protein subunits UQCRC1/QCR1 and UQCRC2/QCR2, and 6 low-molecular weight protein subunits UQCRH/QCR6, UQCRB/QCR7, UQCRQ/QCR8, UQCR10/QCR9, UQCR11/QCR10 and subunit 9, the cleavage product of Rieske protein UQCRFS1. The complex exists as an obligatory dimer and forms supercomplexes (SCs) in the inner mitochondrial membrane with NADH-ubiquinone oxidoreductase (complex I, CI) and cytochrome c oxidase (complex IV, CIV), resulting in different assemblies (supercomplex SCI(1)III(2)IV(1) and megacomplex MCI(2)III(2)IV(2)). Incorporation of the Rieske protein UQCRFS1 is the penultimate step in complex III assembly. Interacts with TTC19, which is involved in the clearance of UQCRFS1 fragments. In terms of assembly, component of the ubiquinol-cytochrome c oxidoreductase (cytochrome b-c1 complex, complex III, CIII). Subunit 9 corresponds to the mitochondrial targeting sequence (MTS) of Rieske protein UQCRFS1. It is retained after processing and incorporated inside complex III, where it remains bound to the complex and localizes between the 2 core subunits UQCRC1/QCR1 and UQCRC2/QCR2. It depends on [2Fe-2S] cluster as a cofactor. Proteolytic processing is necessary for the correct insertion of UQCRFS1 in the complex III dimer. Several fragments are generated during UQCRFS1 insertion, most probably due to the endogenous matrix-processing peptidase (MPP) activity of the 2 core protein subunits UQCRC1/QCR1 and UQCRC2/QCR2, which are homologous to the 2 mitochondrial-processing peptidase (MPP) subunits beta-MPP and alpha-MPP respectively. The action of the protease is also necessary for the clearance of the UQCRFS1 fragments.

The protein localises to the mitochondrion inner membrane. The catalysed reaction is a quinol + 2 Fe(III)-[cytochrome c](out) = a quinone + 2 Fe(II)-[cytochrome c](out) + 2 H(+)(out). In terms of biological role, component of the ubiquinol-cytochrome c oxidoreductase, a multisubunit transmembrane complex that is part of the mitochondrial electron transport chain which drives oxidative phosphorylation. The respiratory chain contains 3 multisubunit complexes succinate dehydrogenase (complex II, CII), ubiquinol-cytochrome c oxidoreductase (cytochrome b-c1 complex, complex III, CIII) and cytochrome c oxidase (complex IV, CIV), that cooperate to transfer electrons derived from NADH and succinate to molecular oxygen, creating an electrochemical gradient over the inner membrane that drives transmembrane transport and the ATP synthase. The cytochrome b-c1 complex catalyzes electron transfer from ubiquinol to cytochrome c, linking this redox reaction to translocation of protons across the mitochondrial inner membrane, with protons being carried across the membrane as hydrogens on the quinol. In the process called Q cycle, 2 protons are consumed from the matrix, 4 protons are released into the intermembrane space and 2 electrons are passed to cytochrome c. The Rieske protein is a catalytic core subunit containing a [2Fe-2S] iron-sulfur cluster. It cycles between 2 conformational states during catalysis to transfer electrons from the quinol bound in the Q(0) site in cytochrome b to cytochrome c1. Incorporation of UQCRFS1 is the penultimate step in complex III assembly. Functionally, component of the ubiquinol-cytochrome c oxidoreductase (cytochrome b-c1 complex, complex III, CIII). UQCRFS1 undergoes proteolytic processing once it is incorporated in the complex III dimer. One of the fragments, called subunit 9, corresponds to its mitochondrial targeting sequence (MTS). The proteolytic processing is necessary for the correct insertion of UQCRFS1 in the complex III dimer, but the persistence of UQCRFS1-derived fragments may prevent newly imported UQCRFS1 to be processed and assembled into complex III and is detrimental for the complex III structure and function. The sequence is that of Cytochrome b-c1 complex subunit Rieske, mitochondrial (UQCRFS1) from Theropithecus gelada (Gelada baboon).